Consider the following 84-residue polypeptide: NAD(P)H-quinone oxidoreductase subunit O (84 aa).

The protein belongs to the complex I NdhO subunit family. NDH-1 can be composed of about 15 different subunits; different subcomplexes with different compositions have been identified which probably have different functions.

It is found in the cellular thylakoid membrane. It catalyses the reaction a plastoquinone + NADH + (n+1) H(+)(in) = a plastoquinol + NAD(+) + n H(+)(out). The catalysed reaction is a plastoquinone + NADPH + (n+1) H(+)(in) = a plastoquinol + NADP(+) + n H(+)(out). Its function is as follows. NDH-1 shuttles electrons from an unknown electron donor, via FMN and iron-sulfur (Fe-S) centers, to quinones in the respiratory and/or the photosynthetic chain. The immediate electron acceptor for the enzyme in this species is believed to be plastoquinone. Couples the redox reaction to proton translocation, and thus conserves the redox energy in a proton gradient. Cyanobacterial NDH-1 also plays a role in inorganic carbon-concentration. The sequence is that of NAD(P)H-quinone oxidoreductase subunit O from Synechococcus sp. (strain CC9902).